The following is a 567-amino-acid chain: Phosphoglucomutase-like protein 5 (567 aa).

Positions 1-26 are disordered; sequence MEGSPIPVLTVPTAPYEDQRPTGGGG. T120 is subject to Phosphothreonine. S122 carries the post-translational modification Phosphoserine.

Belongs to the phosphohexose mutase family. As to quaternary structure, interacts with DMD/dystrophin; the interaction is direct. Interacts with UTRN/utrophin.

The protein resides in the cell junction. It localises to the adherens junction. Its subcellular location is the cytoplasm. It is found in the cytoskeleton. The protein localises to the cell membrane. The protein resides in the sarcolemma. Component of adherens-type cell-cell and cell-matrix junctions. Has no phosphoglucomutase activity in vitro. This Rattus norvegicus (Rat) protein is Phosphoglucomutase-like protein 5.